We begin with the raw amino-acid sequence, 215 residues long: Ras-related protein Rab-5A (215 aa).

10 residues coordinate GTP: Ser29, Ala30, Gly32, Lys33, Ser34, Ser35, His46, Glu47, Thr52, and Gly78. Residue Ser34 coordinates Mg(2+). Short sequence motifs (switch) lie at residues 44 to 56 and 77 to 93; these read QFHE…IGAA and AGQE…YRGA. Thr52 is a Mg(2+) binding site. Residue Ser84 is modified to Phosphoserine. Positions 133, 134, 136, 164, and 165 each coordinate GTP. The segment at 185-215 is disordered; it reads EPQNPGINCTRGRGVDLTEPTQPTRSQCCSN. Over residues 203–215 the composition is skewed to polar residues; it reads EPTQPTRSQCCSN. 2 S-geranylgeranyl cysteine lipidation sites follow: Cys212 and Cys213.

The protein belongs to the small GTPase superfamily. Rab family. Interacts with GDI1; this promotes dissociation from membranes; phosphorylation at Ser-84 disrupts this interaction. Interacts with GDI2; phosphorylation at Ser-84 disrupts the interaction. Interacts with SGSM1 and SGSM3. Interacts with PIK3CB. Interacts with RIN1 and GAPVD1, which regulate its pathway, probably by acting as a GEF. Interacts with RINL. Interacts with ALS2CL, SUN2, ZFYVE20 and RUFY1. Interacts with RABEP1; one RABEP1 homodimer binds two RAB5A chains, but at opposite sides of the dimer. Interacts with OCRL and INPP5F. May be a component of a complex composed of RAB5A, DYN2 and PIK3C3. Does not interact with the BLOC-3 complex (heterodimer of HPS1 and HPS4). Interacts with CLN5. Interacts with APPL2. Interacts with F8A1/F8A2/F8A3. Found in a complex with F8A1/F8A2/F8A3, HTT and RAB5A; mediates the recruitment of HTT by RAB5A onto early endosomes. Interacts with ATP9A. Interacts with PPP1R21; mediates the recruitment of FERRY complex by RAB5A onto early endosomes. Mg(2+) is required as a cofactor. Phosphorylation of Ser-84 in the switch II region by LRRK2 prevents the association of RAB regulatory proteins, including RAB GDP dissociation inhibitors GDI1 and GDI2.

It is found in the cell membrane. The protein localises to the early endosome membrane. It localises to the melanosome. The protein resides in the cytoplasmic vesicle. Its subcellular location is the cell projection. It is found in the ruffle. The protein localises to the membrane. It localises to the cytoplasm. The protein resides in the cytosol. Its subcellular location is the phagosome membrane. It is found in the endosome membrane. The catalysed reaction is GTP + H2O = GDP + phosphate + H(+). With respect to regulation, regulated by guanine nucleotide exchange factors (GEFs) including RINL, which promote the exchange of bound GDP for free GTP. Regulated by GTPase activating proteins (GAPs) which increase the GTP hydrolysis activity. Inhibited by GDP dissociation inhibitors (GDIs). Its function is as follows. The small GTPases Rab are key regulators of intracellular membrane trafficking, from the formation of transport vesicles to their fusion with membranes. Rabs cycle between an inactive GDP-bound form and an active GTP-bound form that is able to recruit to membranes different sets of downstream effectors directly responsible for vesicle formation, movement, tethering and fusion. RAB5A is required for the fusion of plasma membranes and early endosomes. Contributes to the regulation of filopodia extension. Required for the exosomal release of SDCBP, CD63, PDCD6IP and syndecan. Regulates maturation of apoptotic cell-containing phagosomes, probably downstream of DYN2 and PIK3C3. The sequence is that of Ras-related protein Rab-5A (RAB5A) from Sus scrofa (Pig).